Reading from the N-terminus, the 584-residue chain is Aspartate--tRNA(Asp/Asn) ligase (584 aa).

Glu-173 serves as a coordination point for L-aspartate. The tract at residues 197-200 (QLFK) is aspartate. Residue Arg-219 coordinates L-aspartate. ATP is bound by residues 219–221 (RDE) and Gln-228. His-446 provides a ligand contact to L-aspartate. Glu-476 is a binding site for ATP. Residue Arg-483 coordinates L-aspartate. Residue 528 to 531 (GLDR) coordinates ATP.

The protein belongs to the class-II aminoacyl-tRNA synthetase family. Type 1 subfamily. Homodimer.

Its subcellular location is the cytoplasm. It catalyses the reaction tRNA(Asx) + L-aspartate + ATP = L-aspartyl-tRNA(Asx) + AMP + diphosphate. In terms of biological role, aspartyl-tRNA synthetase with relaxed tRNA specificity since it is able to aspartylate not only its cognate tRNA(Asp) but also tRNA(Asn). Reaction proceeds in two steps: L-aspartate is first activated by ATP to form Asp-AMP and then transferred to the acceptor end of tRNA(Asp/Asn). This Sulfurovum sp. (strain NBC37-1) protein is Aspartate--tRNA(Asp/Asn) ligase.